We begin with the raw amino-acid sequence, 580 residues long: Rho guanine nucleotide exchange factor 25 (580 aa).

Residues 48–67 (AASGLAAPSGPSSGLSSGPC) show a composition bias toward low complexity. Disordered stretches follow at residues 48–76 (AASGLAAPSGPSSGLSSGPCSPGPPGPVS) and 128–157 (LEGPGDKTQPPEEETLSQAPESEEEQKKKA). Residues 160-336 (RSMYVLSELV…CFVPKRCNDM (177 aa)) enclose the DH domain. Residues 278 to 299 (LGHRLQLNDLLIKPVQRIMKYQ) are important for binding to Rho GTPases. The 119-residue stretch at 348 to 466 (KLTAQGKLLG…WIKHVAQILE (119 aa)) folds into the PH domain. The sufficient to bind activated GNAQ stretch occupies residues 467–493 (SQRDFLNALQSPIEYQRRESQTNSLGR). Disordered regions lie at residues 482–524 (QRRE…GSLP) and 545–580 (ALGDIPQAPHDSPPVSPTPKTPPCQARLAKLDEDEL). Over residues 509-520 (DQAQGSTHTPIN) the composition is skewed to polar residues. Residues 555–566 (DSPPVSPTPKTP) are compositionally biased toward pro residues.

In terms of assembly, interacts (via the DH domain) with POPDC1 (via the C-terminus cytoplasmic tail). Interacts with activated GNAQ and GNA11. Interacts with RHOA, CDC42 and RAC1. As to expression, isoform 1 and isoform 2 are highly expressed in excitable tissues, such as brain, heart and muscle. Also detected in kidney and liver.

The protein resides in the cell membrane. It is found in the cytoplasm. It localises to the myofibril. Its subcellular location is the sarcomere. May play a role in actin cytoskeleton reorganization in different tissues since its activation induces formation of actin stress fibers. It works as a guanine nucleotide exchange factor for Rho family of small GTPases. Links specifically G alpha q/11-coupled receptors to RHOA activation. May be an important regulator of processes involved in axon and dendrite formation. In neurons seems to be an exchange factor primarily for RAC1. Involved in skeletal myogenesis. The sequence is that of Rho guanine nucleotide exchange factor 25 (ARHGEF25) from Homo sapiens (Human).